Reading from the N-terminus, the 78-residue chain is Translational regulator CsrA (78 aa).

This sequence belongs to the CsrA/RsmA family. In terms of assembly, homodimer; the beta-strands of each monomer intercalate to form a hydrophobic core, while the alpha-helices form wings that extend away from the core.

It is found in the cytoplasm. Functionally, a translational regulator that binds mRNA to regulate translation initiation and/or mRNA stability. Usually binds in the 5'-UTR at or near the Shine-Dalgarno sequence preventing ribosome-binding, thus repressing translation. Its main target seems to be the major flagellin gene, while its function is anatagonized by FliW. The protein is Translational regulator CsrA of Borrelia recurrentis (strain A1).